We begin with the raw amino-acid sequence, 226 residues long: Probable GPI-anchored adhesin-like protein PGA28 (226 aa).

The first 26 residues, 1 to 26 (MKFFAYFAVIALSSASLINLFKRATA), serve as a signal peptide directing secretion. The disordered stretch occupies residues 119-209 (DTEATTGSDT…SQQTSSHAGG (91 aa)). The segment covering 131 to 148 (KAATGATTSAGTGVTKTS) has biased composition (low complexity). A compositionally biased stretch (polar residues) spans 149 to 160 (ETGGVSSTANSE). The segment covering 161 to 208 (AKSGSVTTSKSGSTSISESKTTSGSSSSGKSSSSTSSASSQQTSSHAG) has biased composition (low complexity). A lipid anchor (GPI-anchor amidated serine) is attached at S197. The propeptide at 198–226 (ASSQQTSSHAGGASGAFVSLLGLFAALLI) is removed in mature form.

In terms of processing, predicted to be a cleavage substrate for KEX2.

It is found in the cell membrane. In terms of biological role, putative adhesin which is involved in cell adhesion and virulence. Plays a role in Candida-bacterial interactions and subsequent regulation of filamentation. This Candida albicans (strain SC5314 / ATCC MYA-2876) (Yeast) protein is Probable GPI-anchored adhesin-like protein PGA28 (PGA28).